The primary structure comprises 205 residues: Dephospho-CoA kinase (205 aa).

The region spanning 4–203 (KIGITGGIGS…QKIHYLCSAK (200 aa)) is the DPCK domain. 12-17 (GSGKSV) provides a ligand contact to ATP.

It belongs to the CoaE family.

The protein localises to the cytoplasm. The catalysed reaction is 3'-dephospho-CoA + ATP = ADP + CoA + H(+). It functions in the pathway cofactor biosynthesis; coenzyme A biosynthesis; CoA from (R)-pantothenate: step 5/5. Catalyzes the phosphorylation of the 3'-hydroxyl group of dephosphocoenzyme A to form coenzyme A. The protein is Dephospho-CoA kinase of Bacteroides fragilis (strain YCH46).